The chain runs to 119 residues: Gibberellin-regulated protein 9 (119 aa).

An N-terminal signal peptide occupies residues 1–24; that stretch reads MKKMNVVAFVTLIISFLLLSQVLA.

The protein belongs to the GASA family. In terms of processing, six disulfide bonds may be present.

The protein localises to the secreted. Gibberellin-regulated protein that may function in hormonal controlled steps of development such as seed germination, flowering and seed maturation. The protein is Gibberellin-regulated protein 9 (GASA9) of Arabidopsis thaliana (Mouse-ear cress).